Here is a 733-residue protein sequence, read N- to C-terminus: E3 ubiquitin-protein ligase COP1 (733 aa).

The disordered stretch occupies residues 1 to 43; that stretch reads MSGSRQAGSGSAGTSPGSSAASSVTSASSSLSSSPSPPSVAAS. The Nuclear localization signal 1 signature appears at 111-115; sequence SSRKR. Residues 138 to 176 form an RING-type zinc finger; sequence CPICFDMIEEAYMTKCGHSFCYKCIHQSLEDNNRCPKCN. Positions 197–208 match the Nuclear localization signal 2 motif; that stretch reads KQKQRFEEKRFK. A coiled-coil region spans residues 231–306; it reads DQDNLDLANV…RVEEMSGLYS (76 aa). The Nuclear export signal motif lies at 237–247; sequence LANVNLMLELL. The segment at 307 to 327 is disordered; that stretch reads PVSEDSTVPQFEAPSPSHSSI. WD repeat units follow at residues 421–460, 470–510, 513–553, 555–595, 599–637, 640–679, and 695–731; these read NGSSIVSSIEFDRDCDYFAIAGVTKKIKVYEYGTVIQDAV, TCNS…RSKV, EHEK…SVAS, EAKA…QPIM, GHRKAVSYAKFVSGEEIVSASTDSQLKLWNVGKPYCLRS, GHINEKNFVGLASNGDYIACGSENNSLYLYYKGLSKTLLT, and EDDTNEFVSAVCWRALSDGESNVLIAANSQGTIKVLE. An interaction with TRIB1 region spans residues 645–647; that stretch reads KNF.

The protein belongs to the COP1 family. As to quaternary structure, homodimer. Homodimerization is mediated by the coiled coil domain. Component of the DCX DET1-COP1 ubiquitin ligase complex at least composed of RBX1, DET1, DDB1, CUL4A and COP1. Isoform 2 does not interact with CUL4A but still binds to RBX1, suggesting that the interaction may be mediated by another cullin protein. Isoform 1 and isoform 2 interact with CUL5 but not with CUL1, CUL2 not CUL3. Interacts with bZIP transcription factors JUN, JUNB and JUND but not with FOS, ATF2 nor XBP1. Interacts with p53 (TP53). Interacts with COPS6; this interaction stabilizes RFWD2 through reducing its auto-ubiquitination and decelerating its turnover rate. Interacts with SFN; this interaction leads to SFN degradation. Interacts with p53/TP53 and MTA1. Interacts with TRIB1 (via C-terminus) and TRIB2.

The protein resides in the nucleus speckle. The protein localises to the cytoplasm. The catalysed reaction is S-ubiquitinyl-[E2 ubiquitin-conjugating enzyme]-L-cysteine + [acceptor protein]-L-lysine = [E2 ubiquitin-conjugating enzyme]-L-cysteine + N(6)-ubiquitinyl-[acceptor protein]-L-lysine.. It functions in the pathway protein modification; protein ubiquitination. TRIB1 competes with substrates for RFWD2 binding. Functionally, E3 ubiquitin-protein ligase that mediates ubiquitination and subsequent proteasomal degradation of target proteins. E3 ubiquitin ligases accept ubiquitin from an E2 ubiquitin-conjugating enzyme in the form of a thioester and then directly transfers the ubiquitin to targeted substrates. Involved in JUN ubiquitination and degradation. Directly involved in p53 (TP53) ubiquitination and degradation, thereby abolishing p53-dependent transcription and apoptosis. Ubiquitinates p53 independently of MDM2 or RCHY1. Probably mediates E3 ubiquitin ligase activity by functioning as the essential RING domain subunit of larger E3 complexes. In contrast, it does not constitute the catalytic RING subunit in the DCX DET1-COP1 complex that negatively regulates JUN, the ubiquitin ligase activity being mediated by RBX1. Involved in 14-3-3 protein sigma/SFN ubiquitination and proteasomal degradation, leading to AKT activation and promotion of cell survival. Ubiquitinates MTA1 leading to its proteasomal degradation. Upon binding to TRIB1, ubiquitinates CEBPA, which lacks a canonical COP1-binding motif. In Mus musculus (Mouse), this protein is E3 ubiquitin-protein ligase COP1.